A 911-amino-acid chain; its full sequence is Protein translocase subunit SecA (911 aa).

ATP is bound by residues glutamine 87, 105–109 (GEGKT), and aspartate 512. Residues 861–893 (APGLESEQLSEEGAEVAVASAPVRNDQKLGRNE) form a disordered region. Positions 895, 897, 906, and 907 each coordinate Zn(2+).

This sequence belongs to the SecA family. In terms of assembly, monomer and homodimer. Part of the essential Sec protein translocation apparatus which comprises SecA, SecYEG and auxiliary proteins SecDF-YajC and YidC. The cofactor is Zn(2+).

The protein resides in the cell inner membrane. It localises to the cytoplasm. It catalyses the reaction ATP + H2O + cellular proteinSide 1 = ADP + phosphate + cellular proteinSide 2.. Functionally, part of the Sec protein translocase complex. Interacts with the SecYEG preprotein conducting channel. Has a central role in coupling the hydrolysis of ATP to the transfer of proteins into and across the cell membrane, serving both as a receptor for the preprotein-SecB complex and as an ATP-driven molecular motor driving the stepwise translocation of polypeptide chains across the membrane. This Pseudomonas putida (strain ATCC 700007 / DSM 6899 / JCM 31910 / BCRC 17059 / LMG 24140 / F1) protein is Protein translocase subunit SecA.